Consider the following 968-residue polypeptide: Phosphatidylserine decarboxylase 2 proenzyme (968 aa).

Positions 1–25 are cleaved as a signal peptide; that stretch reads MAKVMRLIIFVCVALVAISVPAASS. Catalysis depends on charge relay system; for autoendoproteolytic cleavage activity residues Asp500, His570, and Ser683. Residue Ser683 is the Schiff-base intermediate with substrate; via pyruvic acid; for decarboxylase activity of the active site. Ser683 is modified (pyruvic acid (Ser); by autocatalysis).

It belongs to the phosphatidylserine decarboxylase family. In terms of assembly, heterodimer of a large membrane-associated beta subunit and a small pyruvoyl-containing alpha subunit. It depends on pyruvate as a cofactor. In terms of processing, is synthesized initially as an inactive proenzyme. Formation of the active enzyme involves a self-maturation process in which the active site pyruvoyl group is generated from an internal serine residue via an autocatalytic post-translational modification. Two non-identical subunits are generated from the proenzyme in this reaction, and the pyruvate is formed at the N-terminus of the alpha chain, which is derived from the carboxyl end of the proenzyme. The autoendoproteolytic cleavage occurs by a canonical serine protease mechanism, in which the side chain hydroxyl group of the serine supplies its oxygen atom to form the C-terminus of the beta chain, while the remainder of the serine residue undergoes an oxidative deamination to produce ammonia and the pyruvoyl prosthetic group on the alpha chain. During this reaction, the Ser that is part of the protease active site of the proenzyme becomes the pyruvoyl prosthetic group, which constitutes an essential element of the active site of the mature decarboxylase.

It localises to the parasitophorous vacuole. The protein resides in the cytoplasmic vesicle. The protein localises to the secretory vesicle. The catalysed reaction is a 1,2-diacyl-sn-glycero-3-phospho-L-serine + H(+) = a 1,2-diacyl-sn-glycero-3-phosphoethanolamine + CO2. It participates in phospholipid metabolism; phosphatidylethanolamine biosynthesis; phosphatidylethanolamine from CDP-diacylglycerol: step 2/2. Its function is as follows. Catalyzes the formation of phosphatidylethanolamine (PtdEtn) from phosphatidylserine (PtdSer). Plays a central role in phospholipid metabolism and in the interorganelle trafficking of phosphatidylserine. Can act on liposomal and host cell PtdSer. The polypeptide is Phosphatidylserine decarboxylase 2 proenzyme (Toxoplasma gondii (strain ATCC 50853 / GT1)).